The following is a 116-amino-acid chain: Cocaine- and amphetamine-regulated transcript protein (116 aa).

A signal peptide spans 1–27; the sequence is MESSRVRLLPLLGAALLLMLPLLGTRA. Tyr41 carries the phosphotyrosine modification. The residue at position 48 (Ser48) is a Phosphoserine. 3 disulfide bridges follow: Cys82–Cys100, Cys88–Cys108, and Cys102–Cys115.

Belongs to the CART family. As to expression, hypothalamus. Found in neurons of the ventrolateral part of the arcuate nucleus, in the external zone of the median eminence, and also found in terminals in the periventricular part of the paraventricular nucleus.

Its subcellular location is the secreted. Satiety factor closely associated with the actions of leptin and neuropeptide Y; this anorectic peptide inhibits both normal and starvation-induced feeding and completely blocks the feeding response induced by neuropeptide Y and regulated by leptin in the hypothalamus. It promotes neuronal development and survival in vitro. In Homo sapiens (Human), this protein is Cocaine- and amphetamine-regulated transcript protein (CARTPT).